The primary structure comprises 276 residues: Elongation factor Ts, mitochondrial (276 aa).

Belongs to the EF-Ts family.

Its subcellular location is the mitochondrion. Functionally, associates with the EF-Tu.GDP complex and induces the exchange of GDP to GTP. It remains bound to the aminoacyl-tRNA.EF-Tu.GTP complex up to the GTP hydrolysis stage on the ribosome. This is Elongation factor Ts, mitochondrial from Leishmania infantum.